We begin with the raw amino-acid sequence, 852 residues long: DNA mismatch repair protein MutS (852 aa).

602–609 serves as a coordination point for ATP; the sequence is GPNMSGKS.

It belongs to the DNA mismatch repair MutS family.

This protein is involved in the repair of mismatches in DNA. It is possible that it carries out the mismatch recognition step. This protein has a weak ATPase activity. In Streptococcus thermophilus (strain ATCC BAA-250 / LMG 18311), this protein is DNA mismatch repair protein MutS.